A 459-amino-acid chain; its full sequence is Bifunctional protein GlmU (459 aa).

The interval 1–229 (MLTQEIIIVI…YEEILGINNK (229 aa)) is pyrophosphorylase. UDP-N-acetyl-alpha-D-glucosamine is bound by residues 11 to 14 (LAAG), K25, Q76, 81 to 82 (GT), 103 to 105 (YGD), G140, E154, and N227. D105 is a Mg(2+) binding site. N227 contacts Mg(2+). Residues 230 to 250 (LQLSNLEKIFQKKQINKLLIN) are linker. Residues 251-459 (GVTIKDPSHF…MRSKKIIKKN (209 aa)) are N-acetyltransferase. Residues R333 and K351 each coordinate UDP-N-acetyl-alpha-D-glucosamine. The Proton acceptor role is filled by H363. Residues Y366 and N377 each coordinate UDP-N-acetyl-alpha-D-glucosamine. Acetyl-CoA is bound by residues A380, 386-387 (NY), S405, and A423.

The protein in the N-terminal section; belongs to the N-acetylglucosamine-1-phosphate uridyltransferase family. This sequence in the C-terminal section; belongs to the transferase hexapeptide repeat family. As to quaternary structure, homotrimer. Requires Mg(2+) as cofactor.

The protein localises to the cytoplasm. It carries out the reaction alpha-D-glucosamine 1-phosphate + acetyl-CoA = N-acetyl-alpha-D-glucosamine 1-phosphate + CoA + H(+). It catalyses the reaction N-acetyl-alpha-D-glucosamine 1-phosphate + UTP + H(+) = UDP-N-acetyl-alpha-D-glucosamine + diphosphate. It functions in the pathway nucleotide-sugar biosynthesis; UDP-N-acetyl-alpha-D-glucosamine biosynthesis; N-acetyl-alpha-D-glucosamine 1-phosphate from alpha-D-glucosamine 6-phosphate (route II): step 2/2. It participates in nucleotide-sugar biosynthesis; UDP-N-acetyl-alpha-D-glucosamine biosynthesis; UDP-N-acetyl-alpha-D-glucosamine from N-acetyl-alpha-D-glucosamine 1-phosphate: step 1/1. Its pathway is bacterial outer membrane biogenesis; LPS lipid A biosynthesis. In terms of biological role, catalyzes the last two sequential reactions in the de novo biosynthetic pathway for UDP-N-acetylglucosamine (UDP-GlcNAc). The C-terminal domain catalyzes the transfer of acetyl group from acetyl coenzyme A to glucosamine-1-phosphate (GlcN-1-P) to produce N-acetylglucosamine-1-phosphate (GlcNAc-1-P), which is converted into UDP-GlcNAc by the transfer of uridine 5-monophosphate (from uridine 5-triphosphate), a reaction catalyzed by the N-terminal domain. The chain is Bifunctional protein GlmU from Buchnera aphidicola subsp. Acyrthosiphon pisum (strain 5A).